The primary structure comprises 317 residues: Glycine--tRNA ligase alpha subunit (317 aa).

Belongs to the class-II aminoacyl-tRNA synthetase family. In terms of assembly, tetramer of two alpha and two beta subunits.

The protein localises to the cytoplasm. The enzyme catalyses tRNA(Gly) + glycine + ATP = glycyl-tRNA(Gly) + AMP + diphosphate. This Cupriavidus metallidurans (strain ATCC 43123 / DSM 2839 / NBRC 102507 / CH34) (Ralstonia metallidurans) protein is Glycine--tRNA ligase alpha subunit.